The sequence spans 1358 residues: Phosphoinositide 3-kinase regulatory subunit 4 (1358 aa).

Gly-2 is lipidated: N-myristoyl glycine. Residues 26 to 324 (FEYDKSLGST…AFPEIFYTFL (299 aa)) form the Protein kinase domain. ATP is bound by residues 32–40 (LGSTRFFKV) and Lys-53. Asp-148 serves as the catalytic Proton acceptor. HEAT repeat units lie at residues 373–411 (NGLV…RLGV), 413–450 (ILLD…LVKE), 458–495 (IYPE…TALR), 531–570 (QALH…FFGR), 572–610 (KAND…YVGW), 612–648 (SSSI…LGLL), and 690–726 (DVYC…PVSR). Residues Ser-808, Ser-813, Ser-853, and Ser-865 each carry the phosphoserine modification. The interval 875–899 (LPKGSDQEVIQTGKPPRSESSAGIC) is disordered. WD repeat units lie at residues 991-1030 (EHKS…GKTT), 1040-1079 (RVGG…LPKS), 1093-1134 (KEDG…NAWT), 1139-1178 (LKSG…PISS), 1182-1223 (PSRA…RRFT), and 1237-1278 (PSPH…RSYV). The tract at residues 1307 to 1326 (KQKVGPSDDTPRRGPESLPV) is disordered. Over residues 1315–1326 (DTPRRGPESLPV) the composition is skewed to basic and acidic residues. Thr-1316 is modified (phosphothreonine). The stretch at 1327 to 1358 (GHHDIITDVATFQTTQGFIVTASRDGIVKVWK) is one WD 7 repeat.

This sequence belongs to the protein kinase superfamily. Ser/Thr protein kinase family. Component of the PI3K (PI3KC3/PI3K-III/class III phosphatidylinositol 3-kinase) complex the core of which is composed of the catalytic subunit PIK3C3, the regulatory subunit PIK3R4 and BECN1 associating with additional regulatory/auxiliary subunits to form alternative complex forms. Alternative complex forms containing a fourth regulatory subunit in a mutually exclusive manner are PI3K complex I (PI3KC3-C1) containing ATG14, and PI3K complex II (PI3KC3-C2) containing UVRAG. PI3KC3-C1 displays a V-shaped architecture with PIK3R4 serving as a bridge between PIK3C3 and the ATG14:BECN1 subcomplex. Both, PI3KC3-C1 and PI3KC3-C2, can associate with further regulatory subunits, such as RUBCN, SH3GLB1/Bif-1, AMBRA1 and NRBF2. PI3KC3-C1 probably associates with PIK3CB. Interacts with RAB7A in the presence of PIK3C3/VPS34. Interacts with NRBF2. Interacts with ARMC3. Mn(2+) serves as cofactor. In terms of processing, myristoylated. Probably autophosphorylated.

It is found in the late endosome. The protein localises to the cytoplasmic vesicle. It localises to the autophagosome. The protein resides in the membrane. It catalyses the reaction L-seryl-[protein] + ATP = O-phospho-L-seryl-[protein] + ADP + H(+). It carries out the reaction L-threonyl-[protein] + ATP = O-phospho-L-threonyl-[protein] + ADP + H(+). Regulatory subunit of the PI3K complex that mediates formation of phosphatidylinositol 3-phosphate; different complex forms are believed to play a role in multiple membrane trafficking pathways: PI3KC3-C1 is involved in initiation of autophagosomes and PI3KC3-C2 in maturation of autophagosomes and endocytosis. Involved in regulation of degradative endocytic trafficking and cytokinesis, probably in the context of PI3KC3-C2. In terms of biological role, regulatory subunit of the PI3K complex. May regulate membrane trafficking late in the endocytic pathway. The chain is Phosphoinositide 3-kinase regulatory subunit 4 (PIK3R4) from Pongo abelii (Sumatran orangutan).